Reading from the N-terminus, the 662-residue chain is Fructose-1,6-bisphosphatase class 3 (662 aa).

The protein belongs to the FBPase class 3 family. Mn(2+) serves as cofactor.

It catalyses the reaction beta-D-fructose 1,6-bisphosphate + H2O = beta-D-fructose 6-phosphate + phosphate. It functions in the pathway carbohydrate biosynthesis; gluconeogenesis. The polypeptide is Fructose-1,6-bisphosphatase class 3 (Clostridium tetani (strain Massachusetts / E88)).